We begin with the raw amino-acid sequence, 196 residues long: NADH-quinone oxidoreductase subunit I (196 aa).

2 consecutive 4Fe-4S ferredoxin-type domains span residues 54 to 84 and 104 to 133; these read LNRW…VEGA and RVYQ…MTNE. The [4Fe-4S] cluster site is built by Cys-64, Cys-67, Cys-70, Cys-74, Cys-113, Cys-116, Cys-119, and Cys-123.

The protein belongs to the complex I 23 kDa subunit family. In terms of assembly, NDH-1 is composed of 14 different subunits. Subunits NuoA, H, J, K, L, M, N constitute the membrane sector of the complex. It depends on [4Fe-4S] cluster as a cofactor.

Its subcellular location is the cell membrane. The catalysed reaction is a quinone + NADH + 5 H(+)(in) = a quinol + NAD(+) + 4 H(+)(out). NDH-1 shuttles electrons from NADH, via FMN and iron-sulfur (Fe-S) centers, to quinones in the respiratory chain. The immediate electron acceptor for the enzyme in this species is believed to be ubiquinone. Couples the redox reaction to proton translocation (for every two electrons transferred, four hydrogen ions are translocated across the cytoplasmic membrane), and thus conserves the redox energy in a proton gradient. This is NADH-quinone oxidoreductase subunit I from Nocardioides sp. (strain ATCC BAA-499 / JS614).